The primary structure comprises 451 residues: tRNA modification GTPase MnmE (451 aa).

(6S)-5-formyl-5,6,7,8-tetrahydrofolate is bound by residues arginine 23, glutamate 80, and lysine 119. In terms of domain architecture, TrmE-type G spans 215–372; it reads GIKVVLTGQP…LRTVLLKTVG (158 aa). Position 225 (asparagine 225) interacts with K(+). GTP-binding positions include 225–230, 244–250, and 269–272; these read NVGKSS, TEIPGTT, and DTAG. Serine 229 serves as a coordination point for Mg(2+). K(+) contacts are provided by threonine 244, isoleucine 246, and threonine 249. Threonine 250 contacts Mg(2+). Lysine 451 contributes to the (6S)-5-formyl-5,6,7,8-tetrahydrofolate binding site.

The protein belongs to the TRAFAC class TrmE-Era-EngA-EngB-Septin-like GTPase superfamily. TrmE GTPase family. As to quaternary structure, homodimer. Heterotetramer of two MnmE and two MnmG subunits. Requires K(+) as cofactor.

The protein resides in the cytoplasm. Its function is as follows. Exhibits a very high intrinsic GTPase hydrolysis rate. Involved in the addition of a carboxymethylaminomethyl (cmnm) group at the wobble position (U34) of certain tRNAs, forming tRNA-cmnm(5)s(2)U34. The polypeptide is tRNA modification GTPase MnmE (Nitrosomonas eutropha (strain DSM 101675 / C91 / Nm57)).